A 125-amino-acid chain; its full sequence is Gem-associated protein 7 (125 aa).

Methionine 1 is subject to N-acetylmethionine. The 29-residue stretch at 1–29 (MQTPLATPVPVLRLPRGPDGSNRGFAPDG) folds into the SUZ-C domain. The tract at residues 1–52 (MQTPLATPVPVLRLPRGPDGSNRGFAPDGRRAPPKPEVPEPPESRESWEQQA) is disordered. Threonine 3 bears the Phosphothreonine mark. The Sm domain maps to 59–125 (RYLRSLLAMV…SDIISYTFKP (67 aa)).

Belongs to the gemin-7 family. Part of the core SMN complex that contains SMN1, GEMIN2/SIP1, DDX20/GEMIN3, GEMIN4, GEMIN5, GEMIN6, GEMIN7, GEMIN8 and STRAP/UNRIP. Part of the SMN-Sm complex that contains SMN1, GEMIN2/SIP1, DDX20/GEMIN3, GEMIN4, GEMIN5, GEMIN6, GEMIN7, GEMIN8, STRAP/UNRIP and the Sm proteins SNRPB, SNRPD1, SNRPD2, SNRPD3, SNRPE, SNRPF and SNRPG. Interacts with GEMIN6; the interaction is direct. Interacts with STRAP/UNRIP; the interaction is direct. Interacts with GEMIN8; the interaction is direct. Interacts with SNRPB, SNRPD2, SNRPD3 and SNRPE; the interaction is direct.

Its subcellular location is the nucleus. It is found in the nucleoplasm. The protein localises to the gem. The protein resides in the cytoplasm. Its function is as follows. The SMN complex catalyzes the assembly of small nuclear ribonucleoproteins (snRNPs), the building blocks of the spliceosome, and thereby plays an important role in the splicing of cellular pre-mRNAs. Most spliceosomal snRNPs contain a common set of Sm proteins SNRPB, SNRPD1, SNRPD2, SNRPD3, SNRPE, SNRPF and SNRPG that assemble in a heptameric protein ring on the Sm site of the small nuclear RNA to form the core snRNP (Sm core). In the cytosol, the Sm proteins SNRPD1, SNRPD2, SNRPE, SNRPF and SNRPG are trapped in an inactive 6S pICln-Sm complex by the chaperone CLNS1A that controls the assembly of the core snRNP. To assemble core snRNPs, the SMN complex accepts the trapped 5Sm proteins from CLNS1A forming an intermediate. Binding of snRNA inside 5Sm triggers eviction of the SMN complex, thereby allowing binding of SNRPD3 and SNRPB to complete assembly of the core snRNP. This Bos taurus (Bovine) protein is Gem-associated protein 7 (GEMIN7).